Here is a 369-residue protein sequence, read N- to C-terminus: Transmembrane protein adipocyte-associated 1 (369 aa).

A glycan (N-linked (GlcNAc...) asparagine) is linked at Asn-20. Helical transmembrane passes span 45–65 (LLLL…LPLA), 73–93 (SSPI…VGIA), 120–140 (FFLL…GHLE), 148–168 (VLAI…TLEI), 189–209 (QFWL…VILP), 237–257 (LLQG…LCCV), and 262–282 (FLYF…GFFG). The N-linked (GlcNAc...) asparagine glycan is linked to Asn-329.

This sequence belongs to the UPF0359 family. Ubiquitous, with higher levels in heart, brain, lung, liver and kidney.

The protein resides in the membrane. In Mus musculus (Mouse), this protein is Transmembrane protein adipocyte-associated 1 (Tpra1).